The primary structure comprises 77 residues: MKLIIFTGLVLFAIVSLIEAQAENEKACLPQYQVCTDAPGNCCSNVVCDCYGRYKSGARIGRNCFCLQKGVIYKREN.

The signal sequence occupies residues methionine 1–alanine 20. Residues glutamine 21–lysine 26 constitute a propeptide that is removed on maturation.

Belongs to the neurotoxin 19 (CSTX) family. 08 (U8-Lctx) subfamily. Post-translationally, contains 4 disulfide bonds. In terms of tissue distribution, expressed by the venom gland.

It is found in the secreted. This is U8-lycotoxin-Ls1d from Lycosa singoriensis (Wolf spider).